The following is a 169-amino-acid chain: Aspartic protease inhibitor 6 (169 aa).

N1 is a glycosylation site (N-linked (GlcNAc...) asparagine). 2 disulfides stabilise this stretch: C30-C75 and C124-C134.

This sequence belongs to the protease inhibitor I3 (leguminous Kunitz-type inhibitor) family.

It localises to the vacuole. In terms of biological role, inhibitor of cathepsin D (aspartic protease). May also inhibit trypsin and chymotrypsin (serine proteases). Protects the plant by inhibiting proteases of invading organisms. The polypeptide is Aspartic protease inhibitor 6 (Solanum tuberosum (Potato)).